The following is a 456-amino-acid chain: Bifunctional protein GlmU (456 aa).

A pyrophosphorylase region spans residues 1-227 (MKLRVVILAA…AQEVEGANNR (227 aa)). UDP-N-acetyl-alpha-D-glucosamine is bound by residues 8-11 (LAAG), K22, Q73, 78-79 (GT), 100-102 (YGD), G137, E152, N167, and N225. Residue D102 coordinates Mg(2+). N225 provides a ligand contact to Mg(2+). Residues 228–248 (QQLASLERALQQRQAEELMTQ) are linker. Positions 249–456 (GVTLIDPARF…WQRPQSKKGT (208 aa)) are N-acetyltransferase. R331 and K349 together coordinate UDP-N-acetyl-alpha-D-glucosamine. Catalysis depends on H361, which acts as the Proton acceptor. Residues Y364 and N375 each coordinate UDP-N-acetyl-alpha-D-glucosamine. Residues A378, 384 to 385 (NY), S403, A421, and R438 contribute to the acetyl-CoA site.

This sequence in the N-terminal section; belongs to the N-acetylglucosamine-1-phosphate uridyltransferase family. It in the C-terminal section; belongs to the transferase hexapeptide repeat family. As to quaternary structure, homotrimer. Requires Mg(2+) as cofactor.

Its subcellular location is the cytoplasm. The enzyme catalyses alpha-D-glucosamine 1-phosphate + acetyl-CoA = N-acetyl-alpha-D-glucosamine 1-phosphate + CoA + H(+). It carries out the reaction N-acetyl-alpha-D-glucosamine 1-phosphate + UTP + H(+) = UDP-N-acetyl-alpha-D-glucosamine + diphosphate. Its pathway is nucleotide-sugar biosynthesis; UDP-N-acetyl-alpha-D-glucosamine biosynthesis; N-acetyl-alpha-D-glucosamine 1-phosphate from alpha-D-glucosamine 6-phosphate (route II): step 2/2. The protein operates within nucleotide-sugar biosynthesis; UDP-N-acetyl-alpha-D-glucosamine biosynthesis; UDP-N-acetyl-alpha-D-glucosamine from N-acetyl-alpha-D-glucosamine 1-phosphate: step 1/1. It functions in the pathway bacterial outer membrane biogenesis; LPS lipid A biosynthesis. In terms of biological role, catalyzes the last two sequential reactions in the de novo biosynthetic pathway for UDP-N-acetylglucosamine (UDP-GlcNAc). The C-terminal domain catalyzes the transfer of acetyl group from acetyl coenzyme A to glucosamine-1-phosphate (GlcN-1-P) to produce N-acetylglucosamine-1-phosphate (GlcNAc-1-P), which is converted into UDP-GlcNAc by the transfer of uridine 5-monophosphate (from uridine 5-triphosphate), a reaction catalyzed by the N-terminal domain. This Idiomarina loihiensis (strain ATCC BAA-735 / DSM 15497 / L2-TR) protein is Bifunctional protein GlmU.